Here is a 538-residue protein sequence, read N- to C-terminus: Cytochrome c-552 (538 aa).

The first 55 residues, 1 to 55 (MKIYLRFVWILIIILNFLLNLFITTNGVIIVNAFKKSLIVAASFASLSLFNSATA), serve as a signal peptide directing secretion. Histidine 133 serves as a coordination point for heme c. Residues cysteine 161, cysteine 164, and lysine 165 each contribute to the heme site. Cysteine 199, cysteine 202, histidine 203, cysteine 264, cysteine 267, and histidine 268 together coordinate heme c. Ca(2+) is bound by residues glutamate 270, tyrosine 271, lysine 316, and glutamine 318. Tyrosine 271 contacts substrate. A substrate-binding site is contributed by histidine 319. Residues histidine 330, cysteine 337, cysteine 340, histidine 341, histidine 356, cysteine 369, cysteine 372, histidine 373, and histidine 448 each contribute to the heme c site.

Belongs to the cytochrome c-552 family. It depends on Ca(2+) as a cofactor. The cofactor is heme c.

The protein localises to the periplasm. The enzyme catalyses 6 Fe(III)-[cytochrome c] + NH4(+) + 2 H2O = 6 Fe(II)-[cytochrome c] + nitrite + 8 H(+). The protein operates within nitrogen metabolism; nitrate reduction (assimilation). In terms of biological role, catalyzes the reduction of nitrite to ammonia, consuming six electrons in the process. This is Cytochrome c-552 from Haemophilus influenzae (strain 86-028NP).